A 248-amino-acid chain; its full sequence is 4-hydroxy-tetrahydrodipicolinate reductase (248 aa).

NAD(+) is bound by residues Asp-32, Gly-74–Thr-76, and Ser-99–Phe-102. His-134 functions as the Proton donor/acceptor in the catalytic mechanism. (S)-2,3,4,5-tetrahydrodipicolinate is bound at residue His-135. The active-site Proton donor is the Lys-138. Residue Gly-144–Thr-145 coordinates (S)-2,3,4,5-tetrahydrodipicolinate.

The protein belongs to the DapB family.

The protein localises to the cytoplasm. It catalyses the reaction (S)-2,3,4,5-tetrahydrodipicolinate + NAD(+) + H2O = (2S,4S)-4-hydroxy-2,3,4,5-tetrahydrodipicolinate + NADH + H(+). It carries out the reaction (S)-2,3,4,5-tetrahydrodipicolinate + NADP(+) + H2O = (2S,4S)-4-hydroxy-2,3,4,5-tetrahydrodipicolinate + NADPH + H(+). It functions in the pathway amino-acid biosynthesis; L-lysine biosynthesis via DAP pathway; (S)-tetrahydrodipicolinate from L-aspartate: step 4/4. Catalyzes the conversion of 4-hydroxy-tetrahydrodipicolinate (HTPA) to tetrahydrodipicolinate. The chain is 4-hydroxy-tetrahydrodipicolinate reductase from Chlorobium limicola (strain DSM 245 / NBRC 103803 / 6330).